Reading from the N-terminus, the 106-residue chain is Molt-inhibiting hormone (106 aa).

The first 29 residues, 1-29, serve as a signal peptide directing secretion; that stretch reads MVNQVAQCFTVRRVWLVVVVGLLVHQTTA. 3 cysteine pairs are disulfide-bonded: Cys36–Cys73, Cys53–Cys69, and Cys56–Cys82. The residue at position 104 (Ala104) is an Alanine amide. Residues 105 to 106 constitute a propeptide that is removed on maturation; that stretch reads GR.

In terms of tissue distribution, sinus gland of the eyestalk.

It localises to the secreted. Inhibits Y-organs where molting hormone (ecdysteroid) is secreted. A molting cycle is initiated when MIH secretion diminishes or stops. The chain is Molt-inhibiting hormone from Faxonius limosus (Spinycheek crayfish).